We begin with the raw amino-acid sequence, 81 residues long: Protein K6 (81 aa).

It belongs to the poxviridae K6 protein family.

The polypeptide is Protein K6 (Homo sapiens (Human)).